The primary structure comprises 50 residues: Fungus-induced protein 3 (50 aa).

This is Fungus-induced protein 3 (fip-3) from Caenorhabditis elegans.